We begin with the raw amino-acid sequence, 68 residues long: Large ribosomal subunit protein uL29 (68 aa).

The protein belongs to the universal ribosomal protein uL29 family.

In Limosilactobacillus fermentum (strain NBRC 3956 / LMG 18251) (Lactobacillus fermentum), this protein is Large ribosomal subunit protein uL29.